A 198-amino-acid polypeptide reads, in one-letter code: Peptidyl-tRNA hydrolase (198 aa).

Position 14 (Y14) interacts with tRNA. H19 (proton acceptor) is an active-site residue. Positions 64, 66, and 113 each coordinate tRNA.

This sequence belongs to the PTH family. Monomer.

The protein localises to the cytoplasm. The catalysed reaction is an N-acyl-L-alpha-aminoacyl-tRNA + H2O = an N-acyl-L-amino acid + a tRNA + H(+). Hydrolyzes ribosome-free peptidyl-tRNAs (with 1 or more amino acids incorporated), which drop off the ribosome during protein synthesis, or as a result of ribosome stalling. Its function is as follows. Catalyzes the release of premature peptidyl moieties from peptidyl-tRNA molecules trapped in stalled 50S ribosomal subunits, and thus maintains levels of free tRNAs and 50S ribosomes. This is Peptidyl-tRNA hydrolase from Acidobacterium capsulatum (strain ATCC 51196 / DSM 11244 / BCRC 80197 / JCM 7670 / NBRC 15755 / NCIMB 13165 / 161).